Consider the following 311-residue polypeptide: GTP cyclohydrolase FolE2 (311 aa).

The protein belongs to the GTP cyclohydrolase IV family.

The catalysed reaction is GTP + H2O = 7,8-dihydroneopterin 3'-triphosphate + formate + H(+). It participates in cofactor biosynthesis; 7,8-dihydroneopterin triphosphate biosynthesis; 7,8-dihydroneopterin triphosphate from GTP: step 1/1. Its function is as follows. Converts GTP to 7,8-dihydroneopterin triphosphate. The polypeptide is GTP cyclohydrolase FolE2 (Hydrogenovibrio crunogenus (strain DSM 25203 / XCL-2) (Thiomicrospira crunogena)).